A 317-amino-acid polypeptide reads, in one-letter code: 4-hydroxy-3-methylbut-2-enyl diphosphate reductase (317 aa).

[4Fe-4S] cluster is bound at residue C12. Positions 41 and 74 each coordinate (2E)-4-hydroxy-3-methylbut-2-enyl diphosphate. Residues H41 and H74 each coordinate dimethylallyl diphosphate. Positions 41 and 74 each coordinate isopentenyl diphosphate. C97 is a [4Fe-4S] cluster binding site. H125 contacts (2E)-4-hydroxy-3-methylbut-2-enyl diphosphate. H125 is a dimethylallyl diphosphate binding site. H125 contacts isopentenyl diphosphate. The active-site Proton donor is E127. T168 is a binding site for (2E)-4-hydroxy-3-methylbut-2-enyl diphosphate. C198 serves as a coordination point for [4Fe-4S] cluster. (2E)-4-hydroxy-3-methylbut-2-enyl diphosphate contacts are provided by S226, S227, N228, and S270. 4 residues coordinate dimethylallyl diphosphate: S226, S227, N228, and S270. Isopentenyl diphosphate-binding residues include S226, S227, N228, and S270.

This sequence belongs to the IspH family. In terms of assembly, homodimer. It depends on [4Fe-4S] cluster as a cofactor.

It catalyses the reaction isopentenyl diphosphate + 2 oxidized [2Fe-2S]-[ferredoxin] + H2O = (2E)-4-hydroxy-3-methylbut-2-enyl diphosphate + 2 reduced [2Fe-2S]-[ferredoxin] + 2 H(+). The catalysed reaction is dimethylallyl diphosphate + 2 oxidized [2Fe-2S]-[ferredoxin] + H2O = (2E)-4-hydroxy-3-methylbut-2-enyl diphosphate + 2 reduced [2Fe-2S]-[ferredoxin] + 2 H(+). The protein operates within isoprenoid biosynthesis; dimethylallyl diphosphate biosynthesis; dimethylallyl diphosphate from (2E)-4-hydroxy-3-methylbutenyl diphosphate: step 1/1. It functions in the pathway isoprenoid biosynthesis; isopentenyl diphosphate biosynthesis via DXP pathway; isopentenyl diphosphate from 1-deoxy-D-xylulose 5-phosphate: step 6/6. Functionally, catalyzes the conversion of 1-hydroxy-2-methyl-2-(E)-butenyl 4-diphosphate (HMBPP) into a mixture of isopentenyl diphosphate (IPP) and dimethylallyl diphosphate (DMAPP). Acts in the terminal step of the DOXP/MEP pathway for isoprenoid precursor biosynthesis. The polypeptide is 4-hydroxy-3-methylbut-2-enyl diphosphate reductase (Serratia proteamaculans (strain 568)).